The following is a 159-amino-acid chain: Small ribosomal subunit protein uS9 (159 aa).

The protein belongs to the universal ribosomal protein uS9 family.

This Rickettsia conorii (strain ATCC VR-613 / Malish 7) protein is Small ribosomal subunit protein uS9.